A 22-amino-acid polypeptide reads, in one-letter code: Magnificalysin II (22 aa).

The segment at 3 to 12 is plays an important role in the hemolytic activity; the sequence is ALAGTIIDGA. The tract at residues 11–22 is N-terminal region; that stretch reads GASLGFDILNKV.

This sequence belongs to the actinoporin family. Sea anemone subfamily. In terms of assembly, octamer or nonamer in membranes. Monomer in the soluble state.

Its subcellular location is the secreted. It localises to the nematocyst. The protein localises to the target cell membrane. Its function is as follows. Pore-forming protein that forms cations-selective hydrophilic pores of around 1 nm and causes cytolysis. Pore formation is a multi-step process that involves specific recognition of membrane sphingomyelin (but neither cholesterol nor phosphatidylcholine) using aromatic rich region and adjacent phosphocholine (POC) binding site, firm binding to the membrane (mainly driven by hydrophobic interactions) accompanied by the transfer of the N-terminal region to the lipid-water interface and finally pore formation after oligomerization of monomers. In Heteractis magnifica (Magnificent sea anemone), this protein is Magnificalysin II.